A 335-amino-acid polypeptide reads, in one-letter code: Galactosylgalactosylxylosylprotein 3-beta-glucuronosyltransferase 3 (335 aa).

At 1–7 (MKLKLKN) the chain is on the cytoplasmic side. Residues 8–28 (VFLAYFLVSIAGLLYALVQLG) form a helical; Signal-anchor for type II membrane protein membrane-spanning segment. Over 29 to 335 (QPCDCLPPLR…GQGSDPAIEV (307 aa)) the chain is Lumenal. UDP-alpha-D-glucuronate-binding positions include 82–84 (PTY), aspartate 113, arginine 156, arginine 161, and 194–196 (DDD). Residue aspartate 196 participates in Mn(2+) binding. The tract at residues 243-252 (WEPNRPFPLD) is interaction with galactose moiety of substrate glycoprotein. Glutamate 281 acts as the Proton donor/acceptor in catalysis. Asparagine 300 carries N-linked (GlcNAc...) asparagine glycosylation. 308-310 (HTR) serves as a coordination point for UDP-alpha-D-glucuronate. A compositionally biased stretch (basic and acidic residues) spans 312–322 (EKPKMKQEEQL). Residues 312 to 335 (EKPKMKQEEQLQRQGQGSDPAIEV) are disordered.

This sequence belongs to the glycosyltransferase 43 family. As to quaternary structure, homodimer; disulfide-linked. Interacts with PXYLP1; the interaction increases the 2-phosphoxylose phosphatase activity of PXYLP1 during completion of linkage region formation in a B3GAT3-mediated manner. Requires Mn(2+) as cofactor. N-glycosylated. As to expression, expressed in heart, aorta, bone, and also in osteoblasts.

It localises to the golgi apparatus membrane. It is found in the golgi apparatus. The protein resides in the cis-Golgi network. It catalyses the reaction 3-O-(beta-D-galactosyl-(1-&gt;3)-beta-D-galactosyl-(1-&gt;4)-beta-D-xylosyl)-L-seryl-[protein] + UDP-alpha-D-glucuronate = 3-O-(beta-D-GlcA-(1-&gt;3)-beta-D-Gal-(1-&gt;3)-beta-D-Gal-(1-&gt;4)-beta-D-Xyl)-L-seryl-[protein] + UDP + H(+). It functions in the pathway protein modification; protein glycosylation. Functionally, glycosaminoglycans biosynthesis. Involved in forming the linkage tetrasaccharide present in heparan sulfate and chondroitin sulfate. Transfers a glucuronic acid moiety from the uridine diphosphate-glucuronic acid (UDP-GlcUA) to the common linkage region trisaccharide Gal-beta-1,3-Gal-beta-1,4-Xyl covalently bound to a Ser residue at the glycosaminylglycan attachment site of proteoglycans. Can also play a role in the biosynthesis of l2/HNK-1 carbohydrate epitope on glycoproteins. Stimulates 2-phosphoxylose phosphatase activity of PXYLP1 in presence of uridine diphosphate-glucuronic acid (UDP-GlcUA) during completion of linkage region formation. This chain is Galactosylgalactosylxylosylprotein 3-beta-glucuronosyltransferase 3 (B3gat3), found in Mus musculus (Mouse).